The following is a 269-amino-acid chain: MKRSDRYSNSNEHFEHMKHEPHYNTYYQPVGKPPKKKKSKRILLKILLTILIIIALFIGIMYFLSTRDNVDELRKIENKSSFVSADNMPEYVKGAFISMEDERFYNHHGFDLKGTTRALFSTISDRDVQGGSTITQQVVKNYFYDNDRSFTRKVKELFVAHRVEKQYNKNEILSFYLNNIYFGDNQYTLEGAANHYFGTTVNKNSTTMSHITVLQSAILASKVNAPSVYNINNMSENFTQRVSTNLEKMKQQNYINETQYQQAMSQLNR.

Residues 46–66 (ILLTILIIIALFIGIMYFLST) form a helical membrane-spanning segment.

The protein belongs to the glycosyltransferase 51 family.

It is found in the cell membrane. It catalyses the reaction [GlcNAc-(1-&gt;4)-Mur2Ac(oyl-L-Ala-gamma-D-Glu-L-Lys-D-Ala-D-Ala)](n)-di-trans,octa-cis-undecaprenyl diphosphate + beta-D-GlcNAc-(1-&gt;4)-Mur2Ac(oyl-L-Ala-gamma-D-Glu-L-Lys-D-Ala-D-Ala)-di-trans,octa-cis-undecaprenyl diphosphate = [GlcNAc-(1-&gt;4)-Mur2Ac(oyl-L-Ala-gamma-D-Glu-L-Lys-D-Ala-D-Ala)](n+1)-di-trans,octa-cis-undecaprenyl diphosphate + di-trans,octa-cis-undecaprenyl diphosphate + H(+). It participates in cell wall biogenesis; peptidoglycan biosynthesis. In terms of biological role, peptidoglycan polymerase that catalyzes glycan chain elongation using lipid-linked disaccharide-pentapeptide as the substrate. This chain is Monofunctional glycosyltransferase, found in Staphylococcus aureus (strain Newman).